The sequence spans 32 residues: Potassium channel toxin alpha-KTx 9.4 (32 aa).

3 disulfide bridges follow: Cys-3–Cys-19, Cys-6–Cys-24, and Cys-10–Cys-26.

Expressed by the venom gland.

It localises to the secreted. Functionally, blocker of human voltage-gated potassium channel Kv1.1/KCNA1. The polypeptide is Potassium channel toxin alpha-KTx 9.4 (Hottentotta tamulus (Eastern Indian scorpion)).